Reading from the N-terminus, the 133-residue chain is Small ribosomal subunit protein uS8 (133 aa).

The segment at 1–28 (MANHDPISDMLTRIRNASEKRHEKTKVP) is disordered. The segment covering 16 to 26 (NASEKRHEKTK) has biased composition (basic and acidic residues).

Belongs to the universal ribosomal protein uS8 family. As to quaternary structure, part of the 30S ribosomal subunit. Contacts proteins S5 and S12.

Functionally, one of the primary rRNA binding proteins, it binds directly to 16S rRNA central domain where it helps coordinate assembly of the platform of the 30S subunit. This chain is Small ribosomal subunit protein uS8, found in Prochlorococcus marinus (strain NATL1A).